Reading from the N-terminus, the 59-residue chain is UPF0434 protein SO_2800 (59 aa).

The protein belongs to the UPF0434 family.

The chain is UPF0434 protein SO_2800 from Shewanella oneidensis (strain ATCC 700550 / JCM 31522 / CIP 106686 / LMG 19005 / NCIMB 14063 / MR-1).